Here is a 557-residue protein sequence, read N- to C-terminus: CCR4-NOT transcription complex subunit 6 (557 aa).

LRR repeat units lie at residues 52–73, 75–96, 98–120, and 121–143; these read HLTALHLSDNSLSCIPSDIAKL, NLVYLDLSHNQIQSLPAELGNM, SLRELHLNYNQLRVLPFELGKLF, and QLQTLSLKGNPLTQDILNLCLEP. Residues 153-557 form a nuclease domain region; that stretch reads LLDNLSGTAK…VNGIHLPGRR (405 aa). Glu240 is a Mg(2+) binding site. 4 residues coordinate substrate: Glu240, Glu276, His361, and Pro366. Asp412 is a binding site for Mg(2+). Catalysis depends on Asp412, which acts as the Proton donor/acceptor. Asn414, Asn481, and Phe486 together coordinate substrate.

It belongs to the CCR4/nocturin family. In terms of assembly, component of the CCR4-NOT complex; distinct complexes seem to exist that differ in the participation of probably mutually exclusive catalytic subunits; the complex contains two deadenylase subunits, CNOT6 or CNOT6L, and CNOT7 or CNOT8. Interacts with CNOT7 and CNOT8. Interacts with UNR. Interacts with ZFP36L1 (via N-terminus). Interacts with ZNF335. Mg(2+) serves as cofactor.

Its subcellular location is the cytoplasm. The protein resides in the nucleus. The catalysed reaction is Exonucleolytic cleavage of poly(A) to 5'-AMP.. Its function is as follows. Poly(A) nuclease with 3'-5' RNase activity. Catalytic component of the CCR4-NOT complex which is one of the major cellular mRNA deadenylases and is linked to various cellular processes including bulk mRNA degradation, miRNA-mediated repression, translational repression during translational initiation and general transcription regulation. Additional complex functions may be a consequence of its influence on mRNA expression. Involved in mRNA decay mediated by the major-protein-coding determinant of instability (mCRD) of the FOS gene in the cytoplasm. In the presence of ZNF335, enhances ligand-dependent transcriptional activity of nuclear hormone receptors. Mediates cell proliferation and cell survival and prevents cellular senescence. The chain is CCR4-NOT transcription complex subunit 6 (Cnot6) from Mus musculus (Mouse).